The following is a 73-amino-acid chain: Kazal peptide Pr13a (73 aa).

The signal sequence occupies residues 1 to 20 (MKYIILFLVLIGLQANLALG). The Kazal-like domain occupies 21 to 73 (SKCKCDCTKYPYSPVCAKELKTGDTETFNNVCQLQCYNCTHMKNYVVIYSGSC). Intrachain disulfides connect Cys-23/Cys-59, Cys-27/Cys-52, and Cys-36/Cys-73.

As to expression, expressed by the venom gland (anterior main gland) (at protein level).

The protein localises to the secreted. Its function is as follows. May act as a serine protease inhibitor, since it possess the kazal serine protease inhibitor signature. This chain is Kazal peptide Pr13a, found in Platymeris rhadamanthus (Red spot assassin bug).